The sequence spans 132 residues: Phosphoribosyl-AMP cyclohydrolase (132 aa).

Mg(2+) is bound at residue Asp-78. Zn(2+) is bound at residue Cys-79. Residues Asp-80 and Asp-82 each contribute to the Mg(2+) site. Residues Cys-96 and Cys-103 each coordinate Zn(2+).

Belongs to the PRA-CH family. As to quaternary structure, homodimer. The cofactor is Mg(2+). Zn(2+) is required as a cofactor.

Its subcellular location is the cytoplasm. The catalysed reaction is 1-(5-phospho-beta-D-ribosyl)-5'-AMP + H2O = 1-(5-phospho-beta-D-ribosyl)-5-[(5-phospho-beta-D-ribosylamino)methylideneamino]imidazole-4-carboxamide. Its pathway is amino-acid biosynthesis; L-histidine biosynthesis; L-histidine from 5-phospho-alpha-D-ribose 1-diphosphate: step 3/9. Its function is as follows. Catalyzes the hydrolysis of the adenine ring of phosphoribosyl-AMP. This is Phosphoribosyl-AMP cyclohydrolase from Nitrosococcus oceani (strain ATCC 19707 / BCRC 17464 / JCM 30415 / NCIMB 11848 / C-107).